The chain runs to 176 residues: Ribosome rescue factor SmrB (176 aa).

The region spanning 97–172 is the Smr domain; sequence LDMHGMTQQE…GDGALLVLLS (76 aa).

Belongs to the SmrB family. As to quaternary structure, associates with collided ribosomes, but not with correctly translating polysomes.

In terms of biological role, acts as a ribosome collision sensor. Detects stalled/collided disomes (pairs of ribosomes where the leading ribosome is stalled and a second ribosome has collided with it) and endonucleolytically cleaves mRNA at the 5' boundary of the stalled ribosome. Stalled/collided disomes form a new interface (primarily via the 30S subunits) that binds SmrB. Cleaved mRNA becomes available for tmRNA ligation, leading to ribosomal subunit dissociation and rescue of stalled ribosomes. The sequence is that of Ribosome rescue factor SmrB from Vibrio campbellii (strain ATCC BAA-1116).